Here is a 156-residue protein sequence, read N- to C-terminus: MPRKGPAPKRPIDIDPVYGSQLVSQLVSKVLQDGKKQVAQRIVYTALEGCREKTGTDPVVTLKRALDNVKPAIEVKSRRVGGATYQVPIEVKGTRGTTLALRWLVGYAQDRREKTMHERLMNEILDASNGLGAAVKKREDTHKMAESNKAFAHYRW.

The protein belongs to the universal ribosomal protein uS7 family. Part of the 30S ribosomal subunit. Contacts proteins S9 and S11.

One of the primary rRNA binding proteins, it binds directly to 16S rRNA where it nucleates assembly of the head domain of the 30S subunit. Is located at the subunit interface close to the decoding center, probably blocks exit of the E-site tRNA. The protein is Small ribosomal subunit protein uS7 of Nocardioides sp. (strain ATCC BAA-499 / JS614).